Here is a 426-residue protein sequence, read N- to C-terminus: Fatty alcohol:caffeoyl-CoA acyltransferase (426 aa).

Residues His162 and Asp374 each act as proton acceptor in the active site.

Belongs to the plant acyltransferase family. Expressed in the outermost circumference of mature roots, the endodermis of young roots and in the seed coat of developing seeds. Expressed in outer integument layer 1 of the seed coat.

In terms of biological role, involved in the synthesis of alkyl hydroxycinnamates in root waxes. Functions as a fatty alcohol:hydroxy cinnamoyl-CoA acyltransferase with apparent preference for caffeoyl-CoA. In Arabidopsis thaliana (Mouse-ear cress), this protein is Fatty alcohol:caffeoyl-CoA acyltransferase.